Here is a 1055-residue protein sequence, read N- to C-terminus: Ubiquitin carboxyl-terminal hydrolase 25 (1055 aa).

One can recognise a UBA-like domain in the interval 14-57 (QKHQQTFLNQLREITGINDTQILQQALKDSNGNLELAVAFLTAK). The SUMO interaction domain (SIM) stretch occupies residues 77–102 (NDRYISVGSQADTNVIDLTGDDKDDL). Ser-85 bears the Phosphoserine mark. Residues 89-95 (TNVIDLT) carry the Required for SUMO paralog-specific binding motif. UIM domains lie at 97 to 116 (DDKDDLQRAIALSLAESNRA) and 123 to 140 (TDEEQAISRVLEASIAEN). Lys-99 participates in a covalent cross-link: Glycyl lysine isopeptide (Lys-Gly) (interchain with G-Cter in SUMO); alternate. Lys-99 is covalently cross-linked (Glycyl lysine isopeptide (Lys-Gly) (interchain with G-Cter in ubiquitin); alternate). Residues 169–657 (VGLKNVGNTC…SAYCLMYIND (489 aa)) form the USP domain. The active site involves Cys-178. The disordered stretch occupies residues 464-507 (VCTSPVDDIDASSPPSGSIPSQTLPSTTEQQGALSSELPSTSPS). Residues 476 to 496 (SPPSGSIPSQTLPSTTEQQGA) show a composition bias toward polar residues. Positions 497–507 (LSSELPSTSPS) are enriched in low complexity. Residues 541 to 578 (TEEELSVLESCLHRWRTEIENDTRDLQESISRIHRTIE) are a coiled coil. Active-site residues include His-599 and His-607. Residues 684–717 (DLRDFVEEDNQRFEKELEEWDAQLAQKALQEKLL) adopt a coiled-coil conformation. Residues 727–749 (TSVTTAQAAGDPEYLEQPSRSDF) are disordered. At Tyr-740 the chain carries Phosphotyrosine.

Belongs to the peptidase C19 family. Homotetramer, inhibited form. Homodimer, active form. Interacts with ACTA1 (via its C-terminus); the interaction occurs for all isoforms but is strongest for isoform USP25m in muscle differentiating cells. Interacts (isoform USP25m only) with MYBPC1; the interaction prevents proteasomal degradation of MYBPC1. Interacts (isoform USP25m only) with FLNC (via filament repeats 17-18, 20-21 and 24). Interacts with GAPDH. Interacts with SUMO3; the interaction sumoylates efficiently USP25. Interacts with SUMO2; the interaction sumoylates efficiently USP25. Interacts with SUMO1; the interaction only weakly sumoylates USP25. Interacts with SYK; phosphorylates USP25 and regulates USP25 intracellular levels. Acetylated. Post-translationally, sumoylation impairs binding to and hydrolysis of ubiquitin chains. Sumoylated preferentially with SUMO2 or SUMO3. Desumoylated by SENP1. Polyubiquitinated by SMURF1 by promoting the 'Lys-48'-linkage leading to proteasomal degradation. In terms of processing, preferentially monoubiquitinated but can also be polyubiquitinated. Autodeubiquitinated. Ubiquitination activates the enzymatic activity either by preventing sumoylation or by allowing novel interactions. Phosphorylation in the C-terminal by SYK regulates USP25 cellular levels. In terms of tissue distribution, isoform USP25a is found in most adult and fetal tissues; expression is moderately high in testis, pancreas, kidney, skeletal muscle, liver, lung, placenta, heart, but very low in peripheral blood, colon, small intestine, ovary, prostate, thymus and spleen. Expressed in the brain, with high levels in the cerebral cortex. Isoform USP25b is found in all tissues except heart and skeletal muscle. Isoform USP25m is heart and skeletal muscle specific.

Its subcellular location is the cytoplasm. It localises to the nucleus. It catalyses the reaction Thiol-dependent hydrolysis of ester, thioester, amide, peptide and isopeptide bonds formed by the C-terminal Gly of ubiquitin (a 76-residue protein attached to proteins as an intracellular targeting signal).. In terms of biological role, deubiquitinating enzyme that hydrolyzes ubiquitin moieties conjugated to substrates and thus, functions in various biological processes including inflammation and immune response. Modulates the Wnt/beta-catenin pathway by deubiquitinating and stabilizing tankyrases TNKS1 and TNKS2. Regulates KEAP1-NRF2 axis in the defense against oxidative assaults by deubiquitinating KEAP1 and protecting it from degradation leading to degradation of the NRF2 transcription factor that is responsible for mounting an anti-oxidation gene expression program. Positively regulates RNA virus-induced innate signaling by interacting with and deubiquitinating ERLIN1 and ERLIN2. In turn, restricts virus production by regulating cholesterol biosynthetic flux. Acts as a negative regulator of interleukin-17-mediated signaling and inflammation through the removal of 'Lys-63'-linked ubiquitination of TRAF5 and TRAF6. Prevents the ubiquitination and degradation of TRAF3 to reduce the phosphorylation levels of JNK and P38, the secretion of IL-1B and to induce endotoxin tolerance. Functionally, the muscle-specific isoform (USP25m) may have a role in the regulation of muscular differentiation and function. The sequence is that of Ubiquitin carboxyl-terminal hydrolase 25 (USP25) from Homo sapiens (Human).